The sequence spans 356 residues: Protein pelota homolog (356 aa).

This sequence belongs to the eukaryotic release factor 1 family. Pelota subfamily. Monomer. Requires a divalent metal cation as cofactor.

The protein localises to the cytoplasm. Its function is as follows. May function in recognizing stalled ribosomes, interact with stem-loop structures in stalled mRNA molecules, and effect endonucleolytic cleavage of the mRNA. May play a role in the release non-functional ribosomes and degradation of damaged mRNAs. Has endoribonuclease activity. The protein is Protein pelota homolog of Staphylothermus marinus (strain ATCC 43588 / DSM 3639 / JCM 9404 / F1).